The following is a 170-amino-acid chain: Shikimate kinase (170 aa).

Residue 11–16 coordinates ATP; the sequence is LSGKST. Ser-15 is a binding site for Mg(2+). Residues Asp-33, Arg-57, and Gly-79 each contribute to the substrate site. Arg-119 contacts ATP. Arg-137 is a binding site for substrate.

The protein belongs to the shikimate kinase family. In terms of assembly, monomer. The cofactor is Mg(2+).

The protein resides in the cytoplasm. The catalysed reaction is shikimate + ATP = 3-phosphoshikimate + ADP + H(+). The protein operates within metabolic intermediate biosynthesis; chorismate biosynthesis; chorismate from D-erythrose 4-phosphate and phosphoenolpyruvate: step 5/7. Its function is as follows. Catalyzes the specific phosphorylation of the 3-hydroxyl group of shikimic acid using ATP as a cosubstrate. The chain is Shikimate kinase from Clostridium botulinum (strain Okra / Type B1).